The primary structure comprises 1665 residues: Cortactin-binding protein 2 (1665 aa).

A coiled-coil region spans residues 120 to 277 (RKMQERMSTQ…EQLKRGNDSK (158 aa)). Disordered stretches follow at residues 203-222 (EKKKTNELEEELSAEKRRST), 368-480 (VSSV…SPTS), and 500-620 (RFTS…PSID). Composition is skewed to polar residues over residues 388 to 399 (SIGSTPDLASST) and 410 to 429 (TGQTSGIASQNYSQASSMHS). The span at 455–469 (QGNANDQDQNGNTTQ) shows a compositional bias: low complexity. A compositionally biased stretch (polar residues) spans 470-480 (SPPSRDVSPTS). Asymmetric dimethylarginine is present on Arg500. ANK repeat units lie at residues 711–741 (GRPTLLQQAAAQGNVTLLSMLLNEEGLDINY), 745–774 (DGHSALYSAAKNGHTDCVRLLLNAKAQIDA), 778–807 (NGFTPLCAAAAQGHFECVELLIAYHANIDH), 811–840 (GGQTPLYLACKNGNKECIKVLLEAGTDRSV), and 844–873 (DGWTPVHAAVDTGNVDSLKLLMYHRAPTLG). The interval 875-902 (SLNEEEPEPGAFDLDQGQEGSEGTAKPV) is disordered. The ANK 6 repeat unit spans residues 914 to 944 (EGWTAAHIAASKGFKNCLEILCRHGGLEPER). The tract at residues 1447–1495 (CSKKKGENGAWRKVSTNPRKKSGRFSSPTWSKPDLGEEGTKNKTMSQPN) is disordered. Ser1526 carries the post-translational modification Phosphoserine. Residues 1575–1665 (NNLRMPVSQK…KNEQVQKPNK (91 aa)) form a disordered region. 2 stretches are compositionally biased toward low complexity: residues 1590-1604 (SSHQTTKRSTSTSKT) and 1623-1641 (SQCSQNTKRSSSSSNTRQT). A compositionally biased stretch (polar residues) spans 1656 to 1665 (KNEQVQKPNK).

In terms of assembly, interacts with CTTN/cortactin SH3 domain. Interacts with STRN, STRN4/zinedin and MOB4/phocein; this interactions mediate the association with the STRIPAK core complex and may regulate dendritic spine distribution of the STRIPAK complex in hippocampal neurons. Activation of glutamate receptors weakens the interaction with STRN and STRN4.

The protein localises to the cytoplasm. It is found in the cell cortex. Its subcellular location is the cell projection. The protein resides in the dendritic spine. Functionally, regulates the dendritic spine distribution of CTTN/cortactin in hippocampal neurons, and thus controls dendritic spinogenesis and dendritic spine maintenance. Associates with the striatin-interacting phosphatase and kinase (STRIPAK) core complex to regulate dendritic spine distribution of the STRIPAK complex in hippocampal neurons. The polypeptide is Cortactin-binding protein 2 (CTTNBP2) (Dasypus novemcinctus (Nine-banded armadillo)).